Consider the following 172-residue polypeptide: Shikimate kinase (172 aa).

Residue 14–19 (GAGKST) participates in ATP binding. Ser-18 serves as a coordination point for Mg(2+). Substrate is bound by residues Asp-36, Arg-60, and Gly-82. Arg-120 contributes to the ATP binding site. Residue Arg-139 coordinates substrate. Gln-156 contacts ATP.

Belongs to the shikimate kinase family. In terms of assembly, monomer. Mg(2+) serves as cofactor.

It is found in the cytoplasm. It carries out the reaction shikimate + ATP = 3-phosphoshikimate + ADP + H(+). Its pathway is metabolic intermediate biosynthesis; chorismate biosynthesis; chorismate from D-erythrose 4-phosphate and phosphoenolpyruvate: step 5/7. Catalyzes the specific phosphorylation of the 3-hydroxyl group of shikimic acid using ATP as a cosubstrate. The sequence is that of Shikimate kinase from Vibrio campbellii (strain ATCC BAA-1116).